The chain runs to 139 residues: Large ribosomal subunit protein uL14 (139 aa).

Belongs to the universal ribosomal protein uL14 family.

The protein is Large ribosomal subunit protein uL14 (RPL23) of Syntrichia ruralis (Great hairy screw-moss).